The sequence spans 158 residues: MFRIGQGFDVHQLVEGRPLIIGGVRIPYEKGLLGHSDADVLLHAVADACLGAIGAGDIGKHFPDTDECYKDADSALLLKQVWELVKQQGYELANLDCTIIAQKPKMAPHIEQMKENIANLLEGELSQVNVKATTTEKLGFTGREEGIAAQAVVLLQKK.

Residues Asp-9 and His-11 each contribute to the a divalent metal cation site. 4-CDP-2-C-methyl-D-erythritol 2-phosphate is bound by residues 9 to 11 and 35 to 36; these read DVH and HS. His-43 provides a ligand contact to a divalent metal cation. 4-CDP-2-C-methyl-D-erythritol 2-phosphate-binding positions include 57 to 59, 62 to 66, 101 to 107, 133 to 136, Phe-140, and Arg-143; these read DIG, FPDTD, AQKPKMA, and TTTE.

It belongs to the IspF family. Homotrimer. A divalent metal cation is required as a cofactor.

The catalysed reaction is 4-CDP-2-C-methyl-D-erythritol 2-phosphate = 2-C-methyl-D-erythritol 2,4-cyclic diphosphate + CMP. It functions in the pathway isoprenoid biosynthesis; isopentenyl diphosphate biosynthesis via DXP pathway; isopentenyl diphosphate from 1-deoxy-D-xylulose 5-phosphate: step 4/6. Involved in the biosynthesis of isopentenyl diphosphate (IPP) and dimethylallyl diphosphate (DMAPP), two major building blocks of isoprenoid compounds. Catalyzes the conversion of 4-diphosphocytidyl-2-C-methyl-D-erythritol 2-phosphate (CDP-ME2P) to 2-C-methyl-D-erythritol 2,4-cyclodiphosphate (ME-CPP) with a corresponding release of cytidine 5-monophosphate (CMP). In Geobacillus sp. (strain WCH70), this protein is 2-C-methyl-D-erythritol 2,4-cyclodiphosphate synthase.